Consider the following 554-residue polypeptide: MFS-type transporter tstD (554 aa).

Composition is skewed to polar residues over residues 1–10 and 27–38; these read MPEPFNSTMP and QDSNQPPEMSAS. The segment at 1 to 68 is disordered; it reads MPEPFNSTMP…ESENNEPYSV (68 aa). An N-linked (GlcNAc...) asparagine glycan is attached at Asn6. The segment covering 39 to 48 has biased composition (basic and acidic residues); it reads SEKKHPENEN. The helical transmembrane segment at 76–96 threads the bilayer; sequence LMVLAASLAGFFSPLSASIYY. Asn107 and Asn114 each carry an N-linked (GlcNAc...) asparagine glycan. Helical transmembrane passes span 115-135, 142-162, 173-193, 202-222, and 231-251; these read LTVT…ASFS, PGYA…ALQN, LQSA…SDII, IAFA…IGGL, and WIFW…FLFF. Residues 281-300 are disordered; it reads KEKQRQQRAENEEENANRQR. A run of 3 helical transmembrane segments spans residues 311–331, 354–374, and 413–433; these read VFVV…GVAF, IKVA…ALST, and IALP…WLMT. The N-linked (GlcNAc...) asparagine glycan is linked to Asn437. Helical transmembrane passes span 442–462, 473–493, and 504–524; these read IILL…LNVL, MVTA…AAMI, and WSYT…LLTM.

It belongs to the major facilitator superfamily.

The protein resides in the membrane. Its function is as follows. MFS-type transporter; part of the gene cluster that mediates the biosynthesis of the antihypercholesterolemic agents phomoidrides which are dimeric anhydrides. The polypeptide is MFS-type transporter tstD (Talaromyces stipitatus (strain ATCC 10500 / CBS 375.48 / QM 6759 / NRRL 1006) (Penicillium stipitatum)).